A 223-amino-acid chain; its full sequence is Large ribosomal subunit protein uL4c (223 aa).

Residues 61 to 96 (TKTRSEVEGGGKKPWKQKGTGNARAGSSNSPLWKGG) are disordered.

This sequence belongs to the universal ribosomal protein uL4 family. In terms of assembly, part of the 50S ribosomal subunit.

It is found in the plastid. The protein localises to the chloroplast. Its function is as follows. Probably binds the 23S rRNA. The sequence is that of Large ribosomal subunit protein uL4c (rpl4) from Guillardia theta (Cryptophyte).